We begin with the raw amino-acid sequence, 698 residues long: MOXD1 homolog 1 (698 aa).

A signal peptide spans 1-20; it reads MSVQDVLWIVLTVQLSFGLA. 3 N-linked (GlcNAc...) asparagine glycosylation sites follow: N36, N140, and N221. The region spanning 54–174 is the DOMON domain; the sequence is GLYWLKWWIN…DTFKVLWSIG (121 aa). The active site involves Y232. Cu cation is bound by residues H265 and H266. C272 and C309 form a disulfide bridge. H347, H425, and H427 together coordinate Cu cation. 2 disulfide bridges follow: C403/C516 and C479/C501. The active site involves H425. N-linked (GlcNAc...) asparagine glycosylation is present at N465. M500 contacts Cu cation. N538 and N561 each carry an N-linked (GlcNAc...) asparagine glycan.

This sequence belongs to the copper type II ascorbate-dependent monooxygenase family. Cu(2+) is required as a cofactor.

Its subcellular location is the secreted. This chain is MOXD1 homolog 1, found in Drosophila melanogaster (Fruit fly).